The sequence spans 21 residues: Fibrinogen beta chain (21 aa).

Gln-1 is subject to Pyrrolidone carboxylic acid. Tyr-6 is modified (sulfotyrosine).

In terms of assembly, heterohexamer; disulfide linked. Contains 2 sets of 3 non-identical chains (alpha, beta and gamma). The 2 heterotrimers are in head to head conformation with the N-termini in a small central domain. Conversion of fibrinogen to fibrin is triggered by thrombin, which cleaves fibrinopeptides A and B from alpha and beta chains, and thus exposes the N-terminal polymerization sites responsible for the formation of the soft clot.

It is found in the secreted. Its function is as follows. Cleaved by the protease thrombin to yield monomers which, together with fibrinogen alpha (FGA) and fibrinogen gamma (FGG), polymerize to form an insoluble fibrin matrix. Fibrin has a major function in hemostasis as one of the primary components of blood clots. In addition, functions during the early stages of wound repair to stabilize the lesion and guide cell migration during re-epithelialization. Was originally thought to be essential for platelet aggregation, based on in vitro studies using anticoagulated blood. However subsequent studies have shown that it is not absolutely required for thrombus formation in vivo. Enhances expression of SELP in activated platelets. Maternal fibrinogen is essential for successful pregnancy. Fibrin deposition is also associated with infection, where it protects against IFNG-mediated hemorrhage. May also facilitate the antibacterial immune response via both innate and T-cell mediated pathways. The chain is Fibrinogen beta chain (FGB) from Rangifer tarandus (Reindeer).